Reading from the N-terminus, the 85-residue chain is uncharacterized protein (85 aa).

An N-terminal signal peptide occupies residues 1-19 (MKTIFTVGAVVLATCLLSG). Cysteine 20 carries N-palmitoyl cysteine lipidation. The S-diacylglycerol cysteine moiety is linked to residue cysteine 20.

It localises to the cell outer membrane. This is an uncharacterized protein from Escherichia coli (strain K12).